A 372-amino-acid chain; its full sequence is Protein L-Myc-1a (372 aa).

2 disordered regions span residues 172–226 (KVAA…ADPF) and 243–306 (NYAA…DDLR). Residues 187–197 (SDDDEDDDEID) are compositionally biased toward acidic residues. Residues 269–284 (ESSSAPSSPLSSPATS) show a composition bias toward low complexity. A bHLH domain is found at 289-341 (STEQRRNFLERKRRDDLRSRFQALREEIPGLSGSSKTSKVAILTQATDYLLQL). Over residues 290–306 (TEQRRNFLERKRRDDLR) the composition is skewed to basic and acidic residues. The segment at 341-369 (LHSSQRRQAQEKRKLKAKQQQLLRRISAL) is leucine-zipper.

In terms of assembly, efficient DNA binding requires dimerization with another bHLH protein. Binds DNA as a heterodimer with max. As to expression, uterus.

The protein resides in the nucleus. In Danio rerio (Zebrafish), this protein is Protein L-Myc-1a.